The following is a 221-amino-acid chain: Deoxyribose-phosphate aldolase (221 aa).

The Proton donor/acceptor role is filled by Asp-91. The active-site Schiff-base intermediate with acetaldehyde is Lys-153. Lys-182 serves as the catalytic Proton donor/acceptor.

It belongs to the DeoC/FbaB aldolase family. DeoC type 1 subfamily.

The protein localises to the cytoplasm. It catalyses the reaction 2-deoxy-D-ribose 5-phosphate = D-glyceraldehyde 3-phosphate + acetaldehyde. It participates in carbohydrate degradation; 2-deoxy-D-ribose 1-phosphate degradation; D-glyceraldehyde 3-phosphate and acetaldehyde from 2-deoxy-alpha-D-ribose 1-phosphate: step 2/2. Its function is as follows. Catalyzes a reversible aldol reaction between acetaldehyde and D-glyceraldehyde 3-phosphate to generate 2-deoxy-D-ribose 5-phosphate. This is Deoxyribose-phosphate aldolase from Clostridium botulinum (strain Eklund 17B / Type B).